Reading from the N-terminus, the 348-residue chain is Phosphoribosylformylglycinamidine cyclo-ligase (348 aa).

The protein belongs to the AIR synthase family.

It localises to the cytoplasm. The enzyme catalyses 2-formamido-N(1)-(5-O-phospho-beta-D-ribosyl)acetamidine + ATP = 5-amino-1-(5-phospho-beta-D-ribosyl)imidazole + ADP + phosphate + H(+). The protein operates within purine metabolism; IMP biosynthesis via de novo pathway; 5-amino-1-(5-phospho-D-ribosyl)imidazole from N(2)-formyl-N(1)-(5-phospho-D-ribosyl)glycinamide: step 2/2. The sequence is that of Phosphoribosylformylglycinamidine cyclo-ligase from Ruegeria pomeroyi (strain ATCC 700808 / DSM 15171 / DSS-3) (Silicibacter pomeroyi).